The following is a 575-amino-acid chain: Major outer membrane protein MspA (575 aa).

The N-terminal stretch at 1–19 is a signal peptide; sequence MKKALVFFVALAMIGSVFA.

The protein resides in the cell outer membrane. Its function is as follows. Major component of the outer membrane sheath. This chain is Major outer membrane protein MspA (mspA), found in Treponema maltophilum.